We begin with the raw amino-acid sequence, 395 residues long: Gastric triacylglycerol lipase (395 aa).

A signal peptide spans 1–18 (MWLLLVTSVLSAFGGAHG). The N-linked (GlcNAc...) asparagine glycan is linked to N33. Positions 81-376 (LQHGLIASAT…LPYNHLDFIW (296 aa)) constitute an AB hydrolase-1 domain. S171 functions as the Nucleophile in the catalytic mechanism. C245 and C254 are disulfide-bonded. N-linked (GlcNAc...) asparagine glycosylation is present at N270. Residues D342 and H371 each act as charge relay system in the active site.

This sequence belongs to the AB hydrolase superfamily. Lipase family.

It is found in the secreted. The catalysed reaction is a triacylglycerol + H2O = a diacylglycerol + a fatty acid + H(+). It carries out the reaction 1,2,3-tri-(9Z-octadecenoyl)-glycerol + H2O = 1,2-di-(9Z-octadecenoyl)-sn-glycerol + (9Z)-octadecenoate + H(+). It catalyses the reaction 1,2,3-trioctanoylglycerol + H2O = 1,2-dioctanoyl-sn-glycerol + octanoate + H(+). In terms of biological role, catalyzes the hydrolysis of triacylglycerols to yield free fatty acids, diacylglycerol, monoacylglycerol, and glycerol. Shows a preferential hydrolysis at the sn-3 position of triacylglycerol. This chain is Gastric triacylglycerol lipase (Lipf), found in Mus musculus (Mouse).